The sequence spans 338 residues: Glyceraldehyde-3-phosphate dehydrogenase (338 aa).

NAD(+) contacts are provided by residues Thr-11–Ile-12 and Gly-111. Ser-140–Asn-142 is a binding site for D-glyceraldehyde 3-phosphate. Cys-141 acts as the Nucleophile in catalysis. Residue Arg-169 participates in NAD(+) binding. His-195–Gly-196 serves as a coordination point for D-glyceraldehyde 3-phosphate. An NAD(+)-binding site is contributed by Gln-302.

The protein belongs to the glyceraldehyde-3-phosphate dehydrogenase family. Homotetramer.

It is found in the cytoplasm. The catalysed reaction is D-glyceraldehyde 3-phosphate + phosphate + NADP(+) = (2R)-3-phospho-glyceroyl phosphate + NADPH + H(+). The enzyme catalyses D-glyceraldehyde 3-phosphate + phosphate + NAD(+) = (2R)-3-phospho-glyceroyl phosphate + NADH + H(+). It functions in the pathway carbohydrate degradation; glycolysis; pyruvate from D-glyceraldehyde 3-phosphate: step 1/5. The sequence is that of Glyceraldehyde-3-phosphate dehydrogenase (gap) from Methanobacterium formicicum.